Here is a 152-residue protein sequence, read N- to C-terminus: Nucleoside diphosphate kinase (152 aa).

The ATP site is built by Lys11, Phe59, Arg87, Thr93, Arg104, and Asn114. His117 (pros-phosphohistidine intermediate) is an active-site residue.

This sequence belongs to the NDK family. As to quaternary structure, homotetramer. It depends on Mg(2+) as a cofactor.

Its subcellular location is the cytoplasm. The catalysed reaction is a 2'-deoxyribonucleoside 5'-diphosphate + ATP = a 2'-deoxyribonucleoside 5'-triphosphate + ADP. It catalyses the reaction a ribonucleoside 5'-diphosphate + ATP = a ribonucleoside 5'-triphosphate + ADP. Functionally, major role in the synthesis of nucleoside triphosphates other than ATP. The ATP gamma phosphate is transferred to the NDP beta phosphate via a ping-pong mechanism, using a phosphorylated active-site intermediate. The chain is Nucleoside diphosphate kinase from Prochlorococcus marinus (strain MIT 9312).